Reading from the N-terminus, the 296-residue chain is Ribosomal protein L11 methyltransferase (296 aa).

S-adenosyl-L-methionine-binding residues include Thr139, Gly163, Asp185, and Asn232.

Belongs to the methyltransferase superfamily. PrmA family.

The protein resides in the cytoplasm. The enzyme catalyses L-lysyl-[protein] + 3 S-adenosyl-L-methionine = N(6),N(6),N(6)-trimethyl-L-lysyl-[protein] + 3 S-adenosyl-L-homocysteine + 3 H(+). Methylates ribosomal protein L11. This Rippkaea orientalis (strain PCC 8801 / RF-1) (Cyanothece sp. (strain PCC 8801)) protein is Ribosomal protein L11 methyltransferase.